The sequence spans 228 residues: uncharacterized protein (228 aa).

The first 19 residues, 1 to 19 (MYRYTWLLWWITILLRIQQ), serve as a signal peptide directing secretion. N-linked (GlcNAc...) asparagine; by host glycosylation is found at asparagine 41, asparagine 93, asparagine 100, asparagine 128, and asparagine 164. Residues 189-209 (MWIIPLVIVTTIIVLICFKFP) form a helical membrane-spanning segment.

Belongs to the HHV-5 UL9 family.

The protein localises to the host membrane. This is an uncharacterized protein from Homo sapiens (Human).